Consider the following 890-residue polypeptide: Receptor like protein 23 (890 aa).

A signal peptide spans Met-1 to Ser-22. Over Ser-23 to Arg-850 the chain is Extracellular. Asn-58, Asn-70, Asn-91, Asn-109, and Asn-145 each carry an N-linked (GlcNAc...) asparagine glycan. LRR repeat units lie at residues Phe-97 to Asn-121, Lys-123 to Asn-145, Leu-146 to Lys-171, Ile-173 to Leu-195, His-196 to Asn-218, His-220 to Leu-243, Thr-244 to Asn-268, Tyr-270 to Leu-290, Pro-291 to Ser-316, Leu-318 to Leu-339, Ile-340 to Ser-363, Leu-364 to Pro-389, Thr-391 to Thr-411, Leu-412 to Leu-436, Leu-438 to Asn-461, Ser-462 to Ile-485, Gly-487 to Arg-506, Ser-507 to Leu-527, Arg-528 to Gly-551, Ser-553 to Cys-575, Ser-577 to Ala-598, Leu-599 to Pro-623, Phe-626 to Asn-650, Leu-699 to Lys-724, Leu-726 to Leu-747, Glu-748 to Ile-771, and Phe-773 to Gly-796. N-linked (GlcNAc...) asparagine glycans are attached at residues Asn-189, Asn-207, Asn-242, and Asn-265. Residue Asn-311 is glycosylated (N-linked (GlcNAc...) asparagine). The N-linked (GlcNAc...) asparagine glycan is linked to Asn-351. Asn-461 carries N-linked (GlcNAc...) asparagine glycosylation. N-linked (GlcNAc...) asparagine glycans are attached at residues Asn-505 and Asn-518. Asn-574 carries an N-linked (GlcNAc...) asparagine glycan. Residue Asn-730 is glycosylated (N-linked (GlcNAc...) asparagine). The N-linked (GlcNAc...) asparagine glycan is linked to Asn-778. The chain crosses the membrane as a helical span at residues Ala-851 to Ala-871. At Ser-872–Arg-890 the chain is on the cytoplasmic side.

Belongs to the RLP family. As to quaternary structure, directly interacts with a 20-mer fragment (nlp20) from NLPs through its extracellular LRR domain. Component of a trimeric complex composed of RLP23, SOBIR1 and BAK1. BAK1 is recruited into a pre-formed RLP23-SOBIR1 complex in a ligand-dependent manner. Interacts with SOBIR1.

Its subcellular location is the cell membrane. Involved in the perception of necrosis and ethylene-inducing peptide 1-like proteins (NLPs), that act as extracellular signals mediating immune activation. Component of the RLP23-SOBIR1-BAK1 complex that mediates NLP-triggered immunity. This Arabidopsis thaliana (Mouse-ear cress) protein is Receptor like protein 23.